The sequence spans 175 residues: Sec-independent protein translocase protein TatB (175 aa).

The helical transmembrane segment at 1–21 (MLDLGLSKMALIGVVALVVLG) threads the bilayer. Low complexity predominate over residues 99–115 (GDPAAADASGGLGATSD). Positions 99–118 (GDPAAADASGGLGATSDEPS) are disordered.

This sequence belongs to the TatB family. In terms of assembly, the Tat system comprises two distinct complexes: a TatABC complex, containing multiple copies of TatA, TatB and TatC subunits, and a separate TatA complex, containing only TatA subunits. Substrates initially bind to the TatABC complex, which probably triggers association of the separate TatA complex to form the active translocon.

It localises to the cell inner membrane. Part of the twin-arginine translocation (Tat) system that transports large folded proteins containing a characteristic twin-arginine motif in their signal peptide across membranes. Together with TatC, TatB is part of a receptor directly interacting with Tat signal peptides. TatB may form an oligomeric binding site that transiently accommodates folded Tat precursor proteins before their translocation. In Burkholderia thailandensis (strain ATCC 700388 / DSM 13276 / CCUG 48851 / CIP 106301 / E264), this protein is Sec-independent protein translocase protein TatB.